Reading from the N-terminus, the 76-residue chain is Acyl carrier protein (76 aa).

The region spanning 1–76 (MSIEERVKKI…SAIDYVQNNQ (76 aa)) is the Carrier domain. Ser36 is subject to O-(pantetheine 4'-phosphoryl)serine.

Belongs to the acyl carrier protein (ACP) family. In terms of processing, 4'-phosphopantetheine is transferred from CoA to a specific serine of apo-ACP by AcpS. This modification is essential for activity because fatty acids are bound in thioester linkage to the sulfhydryl of the prosthetic group.

The protein resides in the cytoplasm. It functions in the pathway lipid metabolism; fatty acid biosynthesis. Carrier of the growing fatty acid chain in fatty acid biosynthesis. The sequence is that of Acyl carrier protein from Haemophilus influenzae (strain 86-028NP).